A 156-amino-acid polypeptide reads, in one-letter code: Small ribosomal subunit protein uS7 (156 aa).

It belongs to the universal ribosomal protein uS7 family. Part of the 30S ribosomal subunit. Contacts proteins S9 and S11.

Functionally, one of the primary rRNA binding proteins, it binds directly to 16S rRNA where it nucleates assembly of the head domain of the 30S subunit. Is located at the subunit interface close to the decoding center, probably blocks exit of the E-site tRNA. This is Small ribosomal subunit protein uS7 from Proteus mirabilis (strain HI4320).